The chain runs to 283 residues: E3 ubiquitin-protein ligase SGR9, amyloplastic (283 aa).

The transit peptide at 1-32 (MEDENTTIIMASLSALSPSHLTNLTHSILSIS) directs the protein to the amyloplast. An RING-type; atypical zinc finger spans residues 214-255 (CVICKEEMSEGRDVCEMPCQHFFHWKCILPWLSKKNTCPFCR).

Post-translationally, auto-ubiquitinated as part of the enzymatic reaction. Expressed in seedlings, hypocotyls, roots and stems. Present especially in hypocotyl and inflorescence endodermis, as well as in root cap columella, tissues that act as statocytes.

Its subcellular location is the plastid. It localises to the amyloplast. The catalysed reaction is S-ubiquitinyl-[E2 ubiquitin-conjugating enzyme]-L-cysteine + [acceptor protein]-L-lysine = [E2 ubiquitin-conjugating enzyme]-L-cysteine + N(6)-ubiquitinyl-[acceptor protein]-L-lysine.. It functions in the pathway protein modification; protein ubiquitination. In terms of biological role, E3 ubiquitin-protein ligase which accepts ubiquitin from an E2 ubiquitin-conjugating enzyme in the form of a thioester and then directly transfers the ubiquitin to targeted substrates. Modulates amyloplast dynamics and sedimentation in statocytes during inflorescence, hypocotyl and root gravitropism, probably by regulating amyloplast interaction with actin filaments (AFs) in endodermal cells. The protein is E3 ubiquitin-protein ligase SGR9, amyloplastic (SGR9) of Arabidopsis thaliana (Mouse-ear cress).